Here is a 450-residue protein sequence, read N- to C-terminus: Transcription factor AP-2 gamma (450 aa).

K10 participates in a covalent cross-link: Glycyl lysine isopeptide (Lys-Gly) (interchain with G-Cter in SUMO). Disordered regions lie at residues 13–63 (EDCE…FPPP) and 90–126 (LHQP…GLLP). Positions 59 to 64 (YFPPPY) match the PPxY motif motif. The segment covering 95–110 (PTGSQQQAWPGRQSQE) has biased composition (polar residues). S252 carries the post-translational modification Phosphoserine; by PKA. The segment at 293 to 424 (RRKAAHVTLL…YIKEALIVID (132 aa)) is H-S-H (helix-span-helix), dimerization. A disordered region spans residues 431-450 (GDQSPADSNKTLEKMEKHRK). A Phosphoserine modification is found at S434. Basic and acidic residues predominate over residues 440–450 (KTLEKMEKHRK).

The protein belongs to the AP-2 family. In terms of assembly, binds DNA as a dimer. Can form homodimers or heterodimers with other AP-2 family members. Interacts with WWOX. Interacts with UBE2I. Interacts with KCTD1; this interaction represses transcription activation. Interacts with CITED2 (via C-terminus); the interaction stimulates TFAP2B-transcriptional activity. Interacts with CITED4. Interacts with MTA1. Post-translationally, sumoylated on Lys-10; which inhibits transcriptional activity.

Its subcellular location is the nucleus. Its function is as follows. Sequence-specific DNA-binding transcription factor that interacts with cellular enhancer elements to regulate transcription of selected genes, and which plays a key role in early embryonic development. AP-2 factors bind to the consensus sequence 5'-GCCNNNGGC-3' and activate genes involved in a large spectrum of important biological functions. TFAP2C plays a key role in early embryonic development by regulating both inner cell mass (ICM) and trophectoderm differentiation. At the 8-cell stage, during morula development, controls expression of cell-polarity genes. Upon trophoblast commitment, binds to late trophectoderm genes in blastocysts together with CDX2, and later to extra-embryonic ectoderm genes together with SOX2. Binds to both closed and open chromatin with other transcription factors. Involved in the MTA1-mediated epigenetic regulation of ESR1 expression in breast cancer. In Homo sapiens (Human), this protein is Transcription factor AP-2 gamma (TFAP2C).